The following is a 700-amino-acid chain: Elongation factor G (700 aa).

The region spanning 8 to 290 (DKYRNIGISA…AVVELLPSPL (283 aa)) is the tr-type G domain. Residues 17 to 24 (AHIDAGKT), 88 to 92 (DTPGH), and 142 to 145 (NKMD) contribute to the GTP site.

This sequence belongs to the TRAFAC class translation factor GTPase superfamily. Classic translation factor GTPase family. EF-G/EF-2 subfamily.

It localises to the cytoplasm. Its function is as follows. Catalyzes the GTP-dependent ribosomal translocation step during translation elongation. During this step, the ribosome changes from the pre-translocational (PRE) to the post-translocational (POST) state as the newly formed A-site-bound peptidyl-tRNA and P-site-bound deacylated tRNA move to the P and E sites, respectively. Catalyzes the coordinated movement of the two tRNA molecules, the mRNA and conformational changes in the ribosome. The polypeptide is Elongation factor G (Polynucleobacter necessarius subsp. necessarius (strain STIR1)).